The primary structure comprises 666 residues: UvrABC system protein B (666 aa).

Residues 28–171 enclose the Helicase ATP-binding domain; the sequence is NNINQGIQRQ…YLHVGELIEF (144 aa). 41–48 lines the ATP pocket; sequence GATGTGKT. Residues 94–117 carry the Beta-hairpin motif; it reads YFDYYQPEAYKPITDTYIEKDSVT. The Helicase C-terminal domain maps to 436-598; the sequence is QIDDLINELM…IIPKTIIKPI (163 aa). The 36-residue stretch at 624-659 folds into the UVR domain; that stretch reads NQKIKELKKKMEEAAKKREYEVAAQYRDMIVELEAI.

This sequence belongs to the UvrB family. In terms of assembly, forms a heterotetramer with UvrA during the search for lesions. Interacts with UvrC in an incision complex.

Its subcellular location is the cytoplasm. The UvrABC repair system catalyzes the recognition and processing of DNA lesions. A damage recognition complex composed of 2 UvrA and 2 UvrB subunits scans DNA for abnormalities. Upon binding of the UvrA(2)B(2) complex to a putative damaged site, the DNA wraps around one UvrB monomer. DNA wrap is dependent on ATP binding by UvrB and probably causes local melting of the DNA helix, facilitating insertion of UvrB beta-hairpin between the DNA strands. Then UvrB probes one DNA strand for the presence of a lesion. If a lesion is found the UvrA subunits dissociate and the UvrB-DNA preincision complex is formed. This complex is subsequently bound by UvrC and the second UvrB is released. If no lesion is found, the DNA wraps around the other UvrB subunit that will check the other stand for damage. This chain is UvrABC system protein B, found in Ureaplasma parvum serovar 3 (strain ATCC 27815 / 27 / NCTC 11736).